Reading from the N-terminus, the 648-residue chain is Rho GTPase-activating protein 25 (648 aa).

A PH domain is found at 46–151 (RPIKVGWLKK…WVKFLRRVAG (106 aa)). The Rho-GAP domain occupies 160–354 (QRLDETVAYE…MMIRDHEVLF (195 aa)). The segment at 356-559 (KSKDAPISPP…DLDSLQRTVQ (204 aa)) is disordered. Residues Ser-363, Ser-396, and Ser-403 each carry the phosphoserine modification. Residues 393 to 410 (RTDSFSNTASSPDATSPT) are compositionally biased toward polar residues. Thr-407 is modified (phosphothreonine). The span at 417–431 (QHQEDSGKAPRENPG) shows a compositional bias: basic and acidic residues. Polar residues-rich tracts occupy residues 453–462 (SAFQGTTSSK) and 497–515 (DQRT…SQGN). Phosphoserine is present on Ser-537. Positions 540–641 (EAGSKNSGED…VKEFVKSMEK (102 aa)) form a coiled coil.

In terms of biological role, GTPase activator for the Rho-type GTPases by converting them to an inactive GDP-bound state. The protein is Rho GTPase-activating protein 25 (Arhgap25) of Mus musculus (Mouse).